A 212-amino-acid polypeptide reads, in one-letter code: High frequency lysogenization protein HflD homolog (212 aa).

It belongs to the HflD family.

Its subcellular location is the cytoplasm. The protein resides in the cell inner membrane. This chain is High frequency lysogenization protein HflD homolog, found in Stutzerimonas stutzeri (strain A1501) (Pseudomonas stutzeri).